The chain runs to 167 residues: MSHGSGLVRTTCSSGGALGPGQPSEGLLDRVYPLTHGALFKVAQMVTLLIAFICVRSSVPIDYGAHSFFEVVTMCDLIMILIFYLVHLFRFYRVLTCISWPLSELLHYLIGTLLLLIASIVIASKSYNQSGLVAGAIFGFLASFLCLASLWLSYKITCITQSSDASA.

The MARVEL domain maps to 32–158; sequence YPLTHGALFK…SLWLSYKITC (127 aa). Helical transmembrane passes span 35–55, 69–89, 102–122, and 132–152; these read THGA…FICV, FEVV…VHLF, LSEL…SIVI, and LVAG…SLWL.

Belongs to the chemokine-like factor family.

The protein resides in the membrane. This is CKLF-like MARVEL transmembrane domain-containing protein 7 (Cmtm7) from Mus musculus (Mouse).